Consider the following 386-residue polypeptide: Caspase-1-A (386 aa).

Positions 1–100 (MTAQLNKVRR…PPMAPVPIQE (100 aa)) are excised as a propeptide. The 67-residue stretch at 22-88 (SDLLDDLREK…HKTLAKSLGL (67 aa)) folds into the CARD domain. Catalysis depends on residues His-218 and Cys-274. Residues 287 to 296 (DVASPPLEDD) constitute a propeptide that is removed on maturation.

The protein belongs to the peptidase C14A family. Heterotetramer that consists of two anti-parallel arranged heterodimers, each one formed by a 20 kDa (Caspase-1 subunit p20) and a 10 kDa (Caspase-1 subunit p10) subunit. As to quaternary structure, heterotetramer that consists of two anti-parallel arranged heterodimers, each one formed by a 20 kDa (Caspase-1 subunit p20) and a 10 kDa (Caspase-1 subunit p10) subunit. Can form a heterodimer with isoform epsilon which then has an inhibitory effect. The two subunits are derived from the precursor sequence by an autocatalytic mechanism.

It localises to the cytoplasm. The protein resides in the cell membrane. It carries out the reaction Strict requirement for an Asp residue at position P1 and has a preferred cleavage sequence of Tyr-Val-Ala-Asp-|-.. Thiol protease involved in a variety of inflammatory processes by proteolytically cleaving other proteins, such as the precursors of the inflammatory cytokines interleukin-1 beta (IL1B) and interleukin 18 (IL18) as well as the pyroptosis inducer Gasdermin-D (GSDMD), into active mature peptides. Plays a key role in cell immunity as an inflammatory response initiator: once activated through formation of an inflammasome complex, it initiates a pro-inflammatory response through the cleavage of the two inflammatory cytokines IL1B and IL18, releasing the mature cytokines which are involved in a variety of inflammatory processes. Cleaves a tetrapeptide after an Asp residue at position P1. Also initiates pyroptosis, a programmed lytic cell death pathway, through cleavage of GSDMD. The polypeptide is Caspase-1-A (casp1-a) (Xenopus laevis (African clawed frog)).